We begin with the raw amino-acid sequence, 509 residues long: ESX-2 secretion system protein eccD2 (509 aa).

Transmembrane regions (helical) follow at residues 135–155 (LTAAHTAMAIIAMAVGVVLAL), 170–190 (AMAGGIGVLLVIGALVVWWGW), 196–216 (LFSGFGWLAVVLLAVAAACAP), 222–242 (AAHALIGLVVVVLGAITIGVA), 248–268 (QTAVVTAVVTVCGILAAVAAV), 281–301 (ICVLVGLLVLIRMTPTVALWV), 364–384 (VQVGMCVGVSLVLPAAVWGVL), 389–409 (PWAWLALLVAGLTVGLFITQG), 418–438 (AVALVCGASAAVCAGVLKYAL), 449–469 (LWPAIFVAAFAALGLAVALVV), and 487–507 (VLAMIALLPAAAALGGLFAWL).

This sequence belongs to the EccD/Snm4 family. Part of the ESX-2 / type VII secretion system (T7SS), which is composed of cytosolic and membrane components.

The protein resides in the cell membrane. This chain is ESX-2 secretion system protein eccD2 (eccD2), found in Mycobacterium tuberculosis (strain CDC 1551 / Oshkosh).